Here is a 492-residue protein sequence, read N- to C-terminus: MDPYKHRPSSGSNSSFWTTNSGAPVWNNNSALTVGQRGPILLEDYHLIEKLAQFDRERIPERVVHARGASAKGFFEVTHDVSHLTCADFLRAPGVQTPVIVRFSTVVHERGSPETLRDPRGFAVKFYTREGNFDLVGNNMPVFFIRDGMKFPDMVHAFKPNPKTNLQENWRIVDFFSHHPESLHMFTFLFDDVGIPLNYRHMEGFGVNTYSLINRDGKPHLVKFHWKPTCGVKCLLDNEAVTVGGTCHSHATKDLYDSIAAGNYPEWKLYIQTIDLDHEDKFDFDPLDVTKTWPEDIIPLQPVGRMVLNKNVDNFFAENEQIAFCPAISVPAIHYSDDKLLQTRIFSYADTQRHRLGPNYLMLPVNAPKCAHHNNHHDGFMNFMHRDEEVNYFPSRFDPARHAEKVPIPPRVLTRCREKCIIQKENNFKQAGERYRSFDPARQDRFIQRWVDALTHPRVTHEHRTIWISYWSQCDAALGQKLPSRLNLKPSM.

Residues histidine 65 and asparagine 138 contribute to the active site. Position 348 (tyrosine 348) interacts with heme.

This sequence belongs to the catalase family. In terms of assembly, homotetramer. It depends on heme as a cofactor. Scutella, milky endosperm of immature kernels, leaves and epicotyls.

The protein localises to the peroxisome. The catalysed reaction is 2 H2O2 = O2 + 2 H2O. Occurs in almost all aerobically respiring organisms and serves to protect cells from the toxic effects of hydrogen peroxide. The polypeptide is Catalase isozyme 1 (CAT1) (Zea mays (Maize)).